Consider the following 233-residue polypeptide: Cytochrome c biogenesis ATP-binding export protein CcmA (233 aa).

The ABC transporter domain maps to 17–233 (FAGEDLLCVR…AAGLFLEDEG (217 aa)). 49-56 (GPNGSGKS) contacts ATP.

This sequence belongs to the ABC transporter superfamily. CcmA exporter (TC 3.A.1.107) family. As to quaternary structure, the complex is composed of two ATP-binding proteins (CcmA) and two transmembrane proteins (CcmB).

The protein resides in the cell inner membrane. It carries out the reaction heme b(in) + ATP + H2O = heme b(out) + ADP + phosphate + H(+). In terms of biological role, part of the ABC transporter complex CcmAB involved in the biogenesis of c-type cytochromes; once thought to export heme, this seems not to be the case, but its exact role is uncertain. Responsible for energy coupling to the transport system. This is Cytochrome c biogenesis ATP-binding export protein CcmA from Rhodospirillum rubrum (strain ATCC 11170 / ATH 1.1.1 / DSM 467 / LMG 4362 / NCIMB 8255 / S1).